A 956-amino-acid chain; its full sequence is UvrABC system protein A (956 aa).

Residue 33 to 40 (GLSGSGKS) participates in ATP binding. A C4-type zinc finger spans residues 252–279 (CPYCGFSVGELEPRMFSFNSPFGACPTC). ABC transporter domains follow at residues 309 to 587 (WRPI…KNSI) and 607 to 936 (GNGL…KYLK). 639 to 646 (GVSGSGKS) provides a ligand contact to ATP. The C4-type zinc-finger motif lies at 738–764 (CEACKGDGIIKIEMHFLPDVYVPCEVC).

This sequence belongs to the ABC transporter superfamily. UvrA family. In terms of assembly, forms a heterotetramer with UvrB during the search for lesions.

It is found in the cytoplasm. Its function is as follows. The UvrABC repair system catalyzes the recognition and processing of DNA lesions. UvrA is an ATPase and a DNA-binding protein. A damage recognition complex composed of 2 UvrA and 2 UvrB subunits scans DNA for abnormalities. When the presence of a lesion has been verified by UvrB, the UvrA molecules dissociate. In Listeria innocua serovar 6a (strain ATCC BAA-680 / CLIP 11262), this protein is UvrABC system protein A.